A 120-amino-acid chain; its full sequence is Small ribosomal subunit protein uS13m (120 aa).

The protein belongs to the universal ribosomal protein uS13 family. Part of the small ribosomal subunit.

It localises to the mitochondrion. Its function is as follows. Located at the top of the head of the small subunit, it contacts several helices of the 18S rRNA. This is Small ribosomal subunit protein uS13m (RPS13) from Marchantia polymorpha (Common liverwort).